Consider the following 470-residue polypeptide: Ribulose bisphosphate carboxylase large chain (470 aa).

2 residues coordinate substrate: Asn-118 and Thr-168. Lys-170 functions as the Proton acceptor in the catalytic mechanism. Lys-172 is a binding site for substrate. Mg(2+) is bound by residues Lys-196, Asp-198, and Glu-199. At Lys-196 the chain carries N6-carboxylysine. Residue His-289 is the Proton acceptor of the active site. Substrate-binding residues include Arg-290, His-322, and Ser-374. Positions 459–465 (EIKFEFD) match the Interacts with RbcX2 motif.

The protein belongs to the RuBisCO large chain family. Type I subfamily. As to quaternary structure, heterohexadecamer of 8 large chains and 8 small chains; disulfide-linked. The disulfide link is formed within the large subunit homodimers. It depends on Mg(2+) as a cofactor. The disulfide bond which can form in the large chain dimeric partners within the hexadecamer appears to be associated with oxidative stress and protein turnover.

Its subcellular location is the carboxysome. The catalysed reaction is 2 (2R)-3-phosphoglycerate + 2 H(+) = D-ribulose 1,5-bisphosphate + CO2 + H2O. The enzyme catalyses D-ribulose 1,5-bisphosphate + O2 = 2-phosphoglycolate + (2R)-3-phosphoglycerate + 2 H(+). In terms of biological role, ruBisCO catalyzes two reactions: the carboxylation of D-ribulose 1,5-bisphosphate, the primary event in carbon dioxide fixation, as well as the oxidative fragmentation of the pentose substrate in the photorespiration process. Both reactions occur simultaneously and in competition at the same active site. The polypeptide is Ribulose bisphosphate carboxylase large chain (Picosynechococcus sp. (strain ATCC 27264 / PCC 7002 / PR-6) (Agmenellum quadruplicatum)).